The chain runs to 601 residues: uncharacterized protein (601 aa).

The next 3 helical transmembrane spans lie at isoleucine 74–isoleucine 94, valine 104–glycine 124, and leucine 531–tyrosine 551.

The protein localises to the endoplasmic reticulum membrane. This is an uncharacterized protein from Schizosaccharomyces pombe (strain 972 / ATCC 24843) (Fission yeast).